The sequence spans 1106 residues: Carbamoyl phosphate synthase large chain (1106 aa).

The tract at residues 1–402 (MPRREDIRSV…SFQKALRSLE (402 aa)) is carboxyphosphate synthetic domain. ATP is bound by residues Arg129, Arg169, Gly175, Gly176, Glu208, Val210, Glu215, Gly241, Val242, His243, Gln285, and Glu299. Positions 133-328 (KKAMEKIGVR…IAKIAALLSI (196 aa)) constitute an ATP-grasp 1 domain. Gln285, Glu299, and Asn301 together coordinate Mg(2+). Gln285, Glu299, and Asn301 together coordinate Mn(2+). The oligomerization domain stretch occupies residues 403-582 (IDRYGFGSDG…YSSYDEEDES (180 aa)). Residues 583–964 (DVTNAKSVMI…AFLKSQYMAG (382 aa)) are carbamoyl phosphate synthetic domain. The ATP-grasp 2 domain maps to 707–898 (VEVLEKLKLN…IVKYATRIMM (192 aa)). Residues Arg743, Ser782, Leu784, Glu789, Gly814, Ile815, His816, Ser817, Gln857, and Glu869 each contribute to the ATP site. Gln857, Glu869, and Asn871 together coordinate Mg(2+). Mn(2+)-binding residues include Gln857, Glu869, and Asn871. The region spanning 965–1106 (DELPSQGTVF…QEIHAMPKIL (142 aa)) is the MGS-like domain. Positions 965–1106 (DELPSQGTVF…QEIHAMPKIL (142 aa)) are allosteric domain.

This sequence belongs to the CarB family. Composed of two chains; the small (or glutamine) chain promotes the hydrolysis of glutamine to ammonia, which is used by the large (or ammonia) chain to synthesize carbamoyl phosphate. Tetramer of heterodimers (alpha,beta)4. Mg(2+) is required as a cofactor. It depends on Mn(2+) as a cofactor.

The catalysed reaction is hydrogencarbonate + L-glutamine + 2 ATP + H2O = carbamoyl phosphate + L-glutamate + 2 ADP + phosphate + 2 H(+). It catalyses the reaction hydrogencarbonate + NH4(+) + 2 ATP = carbamoyl phosphate + 2 ADP + phosphate + 2 H(+). It functions in the pathway amino-acid biosynthesis; L-arginine biosynthesis; carbamoyl phosphate from bicarbonate: step 1/1. Its pathway is pyrimidine metabolism; UMP biosynthesis via de novo pathway; (S)-dihydroorotate from bicarbonate: step 1/3. Large subunit of the glutamine-dependent carbamoyl phosphate synthetase (CPSase). CPSase catalyzes the formation of carbamoyl phosphate from the ammonia moiety of glutamine, carbonate, and phosphate donated by ATP, constituting the first step of 2 biosynthetic pathways, one leading to arginine and/or urea and the other to pyrimidine nucleotides. The large subunit (synthetase) binds the substrates ammonia (free or transferred from glutamine from the small subunit), hydrogencarbonate and ATP and carries out an ATP-coupled ligase reaction, activating hydrogencarbonate by forming carboxy phosphate which reacts with ammonia to form carbamoyl phosphate. The chain is Carbamoyl phosphate synthase large chain from Leptospira interrogans serogroup Icterohaemorrhagiae serovar copenhageni (strain Fiocruz L1-130).